Consider the following 110-residue polypeptide: Keratin-associated protein 6-3 (110 aa).

The protein belongs to the KRTAP type 6 family. Interacts with hair keratins.

Its function is as follows. In the hair cortex, hair keratin intermediate filaments are embedded in an interfilamentous matrix, consisting of hair keratin-associated proteins (KRTAP), which are essential for the formation of a rigid and resistant hair shaft through their extensive disulfide bond cross-linking with abundant cysteine residues of hair keratins. The matrix proteins include the high-sulfur and high-glycine-tyrosine keratins. In Homo sapiens (Human), this protein is Keratin-associated protein 6-3.